A 152-amino-acid chain; its full sequence is D-aminoacyl-tRNA deacylase (152 aa).

Residues 142 to 143 carry the Gly-cisPro motif, important for rejection of L-amino acids motif; sequence GP.

It belongs to the DTD family. As to quaternary structure, homodimer.

It localises to the cytoplasm. The catalysed reaction is glycyl-tRNA(Ala) + H2O = tRNA(Ala) + glycine + H(+). It catalyses the reaction a D-aminoacyl-tRNA + H2O = a tRNA + a D-alpha-amino acid + H(+). Functionally, an aminoacyl-tRNA editing enzyme that deacylates mischarged D-aminoacyl-tRNAs. Also deacylates mischarged glycyl-tRNA(Ala), protecting cells against glycine mischarging by AlaRS. Acts via tRNA-based rather than protein-based catalysis; rejects L-amino acids rather than detecting D-amino acids in the active site. By recycling D-aminoacyl-tRNA to D-amino acids and free tRNA molecules, this enzyme counteracts the toxicity associated with the formation of D-aminoacyl-tRNA entities in vivo and helps enforce protein L-homochirality. This chain is D-aminoacyl-tRNA deacylase, found in Burkholderia multivorans (strain ATCC 17616 / 249).